A 185-amino-acid chain; its full sequence is Ribosome-recycling factor (185 aa).

The tract at residues 135–159 is disordered; sequence ANDEVKKLEKDKAITEDESKKGQDE.

It belongs to the RRF family.

It is found in the cytoplasm. Functionally, responsible for the release of ribosomes from messenger RNA at the termination of protein biosynthesis. May increase the efficiency of translation by recycling ribosomes from one round of translation to another. The chain is Ribosome-recycling factor from Campylobacter curvus (strain 525.92).